Consider the following 304-residue polypeptide: N-acetylglucosaminyl-phosphatidylinositol de-N-acetylase (304 aa).

The Lumenal segment spans residues 1 to 20 (MKMLRRTKVNFSKLLYKITK). The chain crosses the membrane as a helical span at residues 21-38 (LAIVLTILYIYFTPKIVS). At 39–304 (RNNASLQHIF…FVNEFDVYTY (266 aa)) the chain is on the cytoplasmic side.

The protein belongs to the PIGL family.

It localises to the endoplasmic reticulum membrane. The catalysed reaction is a 6-(N-acetyl-alpha-D-glucosaminyl)-1-(1,2-diacyl-sn-glycero-3-phospho)-1D-myo-inositol + H2O = a 6-(alpha-D-glucosaminyl)-1-(1,2-diacyl-sn-glycero-3-phospho)-1D-myo-inositol + acetate. It functions in the pathway glycolipid biosynthesis; glycosylphosphatidylinositol-anchor biosynthesis. Involved in the second step of GPI biosynthesis. De-N-acetylation of N-acetylglucosaminyl-phosphatidylinositol. This Saccharomyces cerevisiae (strain ATCC 204508 / S288c) (Baker's yeast) protein is N-acetylglucosaminyl-phosphatidylinositol de-N-acetylase (GPI12).